Reading from the N-terminus, the 249-residue chain is Leucyl/phenylalanyl-tRNA--protein transferase (249 aa).

It belongs to the L/F-transferase family.

The protein resides in the cytoplasm. It catalyses the reaction N-terminal L-lysyl-[protein] + L-leucyl-tRNA(Leu) = N-terminal L-leucyl-L-lysyl-[protein] + tRNA(Leu) + H(+). It carries out the reaction N-terminal L-arginyl-[protein] + L-leucyl-tRNA(Leu) = N-terminal L-leucyl-L-arginyl-[protein] + tRNA(Leu) + H(+). The enzyme catalyses L-phenylalanyl-tRNA(Phe) + an N-terminal L-alpha-aminoacyl-[protein] = an N-terminal L-phenylalanyl-L-alpha-aminoacyl-[protein] + tRNA(Phe). Functionally, functions in the N-end rule pathway of protein degradation where it conjugates Leu, Phe and, less efficiently, Met from aminoacyl-tRNAs to the N-termini of proteins containing an N-terminal arginine or lysine. The chain is Leucyl/phenylalanyl-tRNA--protein transferase from Cupriavidus metallidurans (strain ATCC 43123 / DSM 2839 / NBRC 102507 / CH34) (Ralstonia metallidurans).